Here is a 341-residue protein sequence, read N- to C-terminus: Tetraacyldisaccharide 4'-kinase (341 aa).

Position 65–72 (65–72 (TVGGSGKT)) interacts with ATP.

The protein belongs to the LpxK family.

It carries out the reaction a lipid A disaccharide + ATP = a lipid IVA + ADP + H(+). It participates in glycolipid biosynthesis; lipid IV(A) biosynthesis; lipid IV(A) from (3R)-3-hydroxytetradecanoyl-[acyl-carrier-protein] and UDP-N-acetyl-alpha-D-glucosamine: step 6/6. In terms of biological role, transfers the gamma-phosphate of ATP to the 4'-position of a tetraacyldisaccharide 1-phosphate intermediate (termed DS-1-P) to form tetraacyldisaccharide 1,4'-bis-phosphate (lipid IVA). The polypeptide is Tetraacyldisaccharide 4'-kinase (Shewanella woodyi (strain ATCC 51908 / MS32)).